Here is a 129-residue protein sequence, read N- to C-terminus: Serum amyloid A-4 protein (129 aa).

An N-terminal signal peptide occupies residues 1-18 (MKLLIGILFCTLIMGVTG). Positions 107–121 (AEEWGRSGQDPDHFR) are enriched in basic and acidic residues. The segment at 107-129 (AEEWGRSGQDPDHFRPAGLPKKY) is disordered.

This sequence belongs to the SAA family. As to quaternary structure, apolipoprotein of the HDL complex.

It is found in the secreted. Functionally, major acute phase reactant. The polypeptide is Serum amyloid A-4 protein (Bos taurus (Bovine)).